The chain runs to 371 residues: Cytokine receptor-like factor 2 (371 aa).

The signal sequence occupies residues 1 to 22 (MGRLVLLWGAAVFLLGGWMALG). The Extracellular portion of the chain corresponds to 23-231 (QGGAAEGVQI…PTPPKPKLSK (209 aa)). N-linked (GlcNAc...) asparagine glycosylation is found at Asn-47 and Asn-55. A disulfide bond links Cys-71 and Cys-84. N-linked (GlcNAc...) asparagine glycosylation is found at Asn-101 and Asn-169. The Fibronectin type-III domain maps to 118–211 (KPSSPKHVRF…DWSEVTCWQR (94 aa)). An intrachain disulfide couples Cys-180 to Cys-218. Residues 200–204 (PSDWS) carry the WSXWS motif motif. The chain crosses the membrane as a helical span at residues 232-252 (FILISSLAILLMVSLLLLSLW). Residues 253 to 371 (KLWRVKKFLI…VMNDRSYVAL (119 aa)) are Cytoplasmic-facing. The short motif at 261–269 (LIPSVPDPK) is the Box 1 motif element. The span at 322–336 (ESPRMLDPQTEEKEA) shows a compositional bias: basic and acidic residues. The interval 322–347 (ESPRMLDPQTEEKEASGGSLQLPHQP) is disordered.

The protein belongs to the type I cytokine receptor family. Type 5 subfamily. In terms of assembly, heterodimer of CRLF2 and IL7R. As to expression, expressed in heart, skeletal muscle, kidney and adult and fetal liver. Primarily expressed in dendrites and monocytes. Weakly expressed in T-cells.

The protein resides in the cell membrane. It is found in the secreted. In terms of biological role, receptor for thymic stromal lymphopoietin (TSLP). Forms a functional complex with TSLP and IL7R which is capable of stimulating cell proliferation through activation of STAT3 and STAT5. Also activates JAK2. Implicated in the development of the hematopoietic system. This Homo sapiens (Human) protein is Cytokine receptor-like factor 2 (CRLF2).